The chain runs to 273 residues: Protein N-terminal and lysine N-methyltransferase EFM7 (273 aa).

A disordered region spans residues 1–32; the sequence is MSDIEDLASGGLFDEPKDFYKPEEQPGSDSYA. Positions 14–24 are enriched in basic and acidic residues; that stretch reads DEPKDFYKPEE. S-adenosyl-L-methionine-binding positions include Trp65, 92-94, Asp114, Trp161, and Ser183; that span reads GAG.

It belongs to the class I-like SAM-binding methyltransferase superfamily. EFM7 family.

It is found in the cytoplasm. Functionally, S-adenosyl-L-methionine-dependent protein methyltransferase that trimethylates the N-terminal glycine 'Gly-2' of elongation factor 1-alpha, before also catalyzing the mono- and dimethylation of 'Lys-3'. This chain is Protein N-terminal and lysine N-methyltransferase EFM7, found in Yarrowia lipolytica (strain CLIB 122 / E 150) (Yeast).